Here is a 179-residue protein sequence, read N- to C-terminus: Large ribosomal subunit protein uL6 (179 aa).

Belongs to the universal ribosomal protein uL6 family. In terms of assembly, part of the 50S ribosomal subunit.

This protein binds to the 23S rRNA, and is important in its secondary structure. It is located near the subunit interface in the base of the L7/L12 stalk, and near the tRNA binding site of the peptidyltransferase center. The polypeptide is Large ribosomal subunit protein uL6 (Pseudomonas savastanoi pv. phaseolicola (strain 1448A / Race 6) (Pseudomonas syringae pv. phaseolicola (strain 1448A / Race 6))).